The chain runs to 391 residues: Putative neutrophil cytosol factor 1B (391 aa).

Positions 1–126 constitute a PX domain; sequence MGDTFIRHIA…DFFKVRPDDL (126 aa). SH3 domains follow at residues 157 to 216 and 227 to 286; these read IILQ…PLDS and YAGE…KSGQ. Positions 286–391 are disordered; that stretch reads QDVSQAQRQI…STKRKLASAV (106 aa). 2 positions are modified to phosphoserine: Ser-304 and Ser-305. Over residues 310-319 the composition is skewed to basic residues; that stretch reads HSIHQRSRKR. Phosphoserine occurs at positions 321, 329, 346, and 349.

It is found in the cytoplasm. Functionally, may be required for activation of the latent NADPH oxidase (necessary for superoxide production). This chain is Putative neutrophil cytosol factor 1B (NCF1B), found in Homo sapiens (Human).